A 199-amino-acid chain; its full sequence is Peroxisomal membrane protein PEX17 (199 aa).

Its subcellular location is the peroxisome membrane. Its function is as follows. Component of the peroxisomal translocation machinery with PEX13 and PEX14. Interacts indirectly with the PTS1 receptor (PAS10/PEX5) and directly binds to PEX14. Required for import of both PTS1 and PTS2 proteins. The polypeptide is Peroxisomal membrane protein PEX17 (PEX17) (Saccharomyces cerevisiae (strain ATCC 204508 / S288c) (Baker's yeast)).